The following is a 253-amino-acid chain: 1-(5-phosphoribosyl)-5-[(5-phosphoribosylamino)methylideneamino] imidazole-4-carboxamide isomerase (253 aa).

The active-site Proton acceptor is the aspartate 8. Aspartate 129 serves as the catalytic Proton donor.

Belongs to the HisA/HisF family.

The protein localises to the cytoplasm. The catalysed reaction is 1-(5-phospho-beta-D-ribosyl)-5-[(5-phospho-beta-D-ribosylamino)methylideneamino]imidazole-4-carboxamide = 5-[(5-phospho-1-deoxy-D-ribulos-1-ylimino)methylamino]-1-(5-phospho-beta-D-ribosyl)imidazole-4-carboxamide. Its pathway is amino-acid biosynthesis; L-histidine biosynthesis; L-histidine from 5-phospho-alpha-D-ribose 1-diphosphate: step 4/9. The sequence is that of 1-(5-phosphoribosyl)-5-[(5-phosphoribosylamino)methylideneamino] imidazole-4-carboxamide isomerase from Microcystis aeruginosa (strain NIES-843 / IAM M-2473).